Here is a 379-residue protein sequence, read N- to C-terminus: Lipoyl synthase 2, mitochondrial (379 aa).

7 residues coordinate [4Fe-4S] cluster: Cys-106, Cys-111, Cys-117, Cys-137, Cys-141, Cys-144, and Ser-352. Residues 122–341 form the Radical SAM core domain; the sequence is EHGTQTATIM…EERGNELGFL (220 aa).

This sequence belongs to the radical SAM superfamily. Lipoyl synthase family. The cofactor is [4Fe-4S] cluster.

The protein localises to the mitochondrion. The catalysed reaction is [[Fe-S] cluster scaffold protein carrying a second [4Fe-4S](2+) cluster] + N(6)-octanoyl-L-lysyl-[protein] + 2 oxidized [2Fe-2S]-[ferredoxin] + 2 S-adenosyl-L-methionine + 4 H(+) = [[Fe-S] cluster scaffold protein] + N(6)-[(R)-dihydrolipoyl]-L-lysyl-[protein] + 4 Fe(3+) + 2 hydrogen sulfide + 2 5'-deoxyadenosine + 2 L-methionine + 2 reduced [2Fe-2S]-[ferredoxin]. Its pathway is protein modification; protein lipoylation via endogenous pathway; protein N(6)-(lipoyl)lysine from octanoyl-[acyl-carrier-protein]: step 2/2. Its function is as follows. Catalyzes the radical-mediated insertion of two sulfur atoms into the C-6 and C-8 positions of the octanoyl moiety bound to the lipoyl domains of lipoate-dependent enzymes, thereby converting the octanoylated domains into lipoylated derivatives. In Drosophila yakuba (Fruit fly), this protein is Lipoyl synthase 2, mitochondrial.